A 660-amino-acid chain; its full sequence is MAKRLVLFAAVVIALVALTTAEGEASRQLQCERELQESSLEACRQVVDQQLAGRLPWSTGLQMRCCQQLRDVSAKCRSVAVSQVARQYEQTVVPPKGGSFYPGETTPLQQLQQGIFWGTSSQTVQGYYPSVTSPRQGSYYPGQASPQQPGQGQQPGKWQEPGQGQQWYYPTSLQQPGQGQQIGKGKQGYYPTSLQQPGQGQQIGQGQQGYYPTSPQHTGQRQQPVQGQQIGQGQQPEQGQQPGQWQQGYYPTSPQQLGQGQQPGQWQQSGQGQQGHYPTSLQQPGQGQQGHYLASQQQPAQGQQGHYPASQQQPGQGQQGHYPASQQQPGQGQQGHYPASQQEPGQGQQGQIPASQQQPGQGQQGHYPASLQQPGQQGHYPTSLQQLGQGQQIGQPGQKQQPGQGQQTGQGQQPEQEQQPGQGQQGYYPTSLQQPGQGQQQGQGQQGYYPTSLQQPGQGQQGHYPASLQQPGQGQGQPGQRQQPGQGQHPEQGQQPGQGQQGYYPTSPQQPGQGQQLGQGQQGYYPTSPQQPGQGQQPGQGQQGHCPMSPQQTGQAQQLGQGQQIGQVQQPGQGQQGYYPTSLQQPGQGQQSGQGQQSGQGHQPGQGQQSGQEKQGYDSPYHVSAEQQAASPMVAKAQQPATQLPTVCRMEGGDALSASQ.

The first 21 residues, 1–21 (MAKRLVLFAAVVIALVALTTA), serve as a signal peptide directing secretion. A compositionally biased stretch (polar residues) spans 127–136 (YYPSVTSPRQ). The disordered stretch occupies residues 127 to 660 (YYPSVTSPRQ…EGGDALSASQ (534 aa)). Low complexity-rich tracts occupy residues 141 to 166 (PGQA…QGQQ), 187 to 200 (QGYY…PGQG), 208 to 248 (QGYY…WQQG), and 255 to 275 (QQLG…GQQG). Positions 276–286 (HYPTSLQQPGQ) are enriched in polar residues. The span at 296–365 (QQQPAQGQQG…QQQPGQGQQG (70 aa)) shows a compositional bias: low complexity. Polar residues predominate over residues 370 to 384 (SLQQPGQQGHYPTSL). Low complexity-rich tracts occupy residues 385–426 (QQLG…GQQG), 478–514 (PGQR…PGQG), 522–535 (QGYY…PGQG), and 551–577 (QQTG…GQQG). The segment covering 590–604 (QQSGQGQQSGQGHQP) has biased composition (gly residues).

This sequence belongs to the gliadin/glutenin family. As to quaternary structure, disulfide-bridge linked aggregates.

Functionally, glutenins are high-molecular weight seed storage proteins of wheat endosperm. Thought to be responsible for the visco-elastic property of wheat dough. This chain is Glutenin, high molecular weight subunit 12, found in Triticum aestivum (Wheat).